Reading from the N-terminus, the 2035-residue chain is MASAVSPANLPAVLLQPRWKRVVGWSGPVPRPRHGHRAVAIKELIVVFGGGNEGIVDELHVYNTATNQWFIPAVRGDIPPGCAAYGFVCDGTRLLVFGGMVEYGKYSNDLYELQASRWEWKRLKAKTPKNGPPPCPRLGHSFSLVGNKCYLFGGLANDSEDPKNNIPRYLNDLYILELRPGSGVVAWDIPITYGVLPPPRESHTAVVYTEKDNKKSKLVIYGGMSGCRLGDLWTLDIDTLTWNKPSLSGVAPLPRSLHSATTIGNKMYVFGGWVPLVMDDVKVATHEKEWKCTNTLACLNLDTMAWETILMDTLEDNIPRARAGHCAVAINTRLYIWSGRDGYRKAWNNQVCCKDLWYLETEKPPPPARVQLVRANTNSLEVSWGAVATADSYLLQLQKYDIPATAATATSPTPNPVPSVPANPPKSPAPAAAAPAVQPLTQVGITLLPQAAPAPPTTTTIQVLPTVPGSSISVPTAARTQGVPAVLKVTGPQATTGTPLVTMRPASQAGKAPVTVTSLPAGVRMVVPTQSAQGTVIGSSPQMSGMAALAAAAAATQKIPPSSAPTVLSVPAGTTIVKTMAVTPGTTTLPATVKVASSPVMVSNPATRMLKTAAAQVGTSVSSATNTSTRPIITVHKSGTVTVAQQAQVVTTVVGGVTKTITLVKSPISVPGGSALISNLGKVMSVVQTKPVQTSAVTGQASTGPVTQIIQTKGPLPAGTILKLVTSADGKPTTIITTTQASGAGTKPTILGISSVSPSTTKPGTTTIIKTIPMSAIITQAGATGVTSSPGIKSPITIITTKVMTSGTGAPAKIITAVPKIATGHGQQGVTQVVLKGAPGQPGTILRTVPMGGVRLVTPVTVSAVKPAVTTLVVKGTTGVTTLGTVTGTVSTSLAGAGGHSTSASLATPITTLGTIATLSSQVINPTAITVSAAQTTLTAAGGLTTPTITMQPVSQPTQVTLITAPSGVEAQPVHDLPVSILASPTTEQPTATVTIADSGQGDVQPGTVTLVCSNPPCETHETGTTNTATTTVVANLGGHPQPTQVQFVCDRQEAAASLVTSTVGQQNGSVVRVCSNPPCETHETGTTNTATTATSNMAGQHGCSNPPCETHETGTTNTATTAMSSVGANHQRDARRACAAGTPAVIRISVATGALEAAQGSKSQCQTRQTSATSTTMTVMATGAPCSAGPLLGPSMAREPGGRSPAFVQLAPLSSKVRLSSPSIKDLPAGRHSHAVSTAAMTRSSVGAGEPRMAPVCESLQGGSPSTTVTVTALEALLCPSATVTQVCSNPPCETHETGTTNTATTSNAGSAQRVCSNPPCETHETGTTHTATTATSNGGTGQPEGGQQPPAGRPCETHQTTSTGTTMSVSVGALLPDATSSHRTVESGLEVAAAPSVTPQAGTALLAPFPTQRVCSNPPCETHETGTTHTATTVTSNMSSNQDPPPAASDQGEVESTQGDSVNITSSSAITTTVSSTLTRAVTTVTQSTPVPGPSVPPPEELQVSPGPRQQLPPRQLLQSASTALMGESAEVLSASQTPELPAAVDLSSTGEPSSGQESAGSAVVATVVVQPPPPTQSEVDQLSLPQELMAEAQAGTTTLMVTGLTPEELAVTAAAEAAAQAAATEEAQALAIQAVLQAAQQAVMGTGEPMDTSEAAATVTQAELGHLSAEGQEGQATTIPIVLTQQELAALVQQQQLQEAQAQQQHHHLPTEALAPADSLNDPAIESNCLNELAGTVPSTVALLPSTATESLAPSNTFVAPQPVVVASPAKLQAAATLTEVANGIESLGVKPDLPPPPSKAPMKKENQWFDVGVIKGTNVMVTHYFLPPDDAVPSDDDLGTVPDYNQLKKQELQPGTAYKFRVAGINACGRGPFSEISAFKTCLPGFPGAPCAIKISKSPDGAHLTWEPPSVTSGKIIEYSVYLAIQSSQAGGELKSSTPAQLAFMRVYCGPSPSCLVQSSSLSNAHIDYTTKPAIIFRIAARNEKGYGPATQVRWLQETSKDSSGTKPANKRPMSSPEMKSAPKKSKADGQ.

N-acetylalanine is present on alanine 2. Position 6 is a phosphoserine (serine 6). 5 Kelch repeats span residues 44–89 (LIVV…GFVC), 93–140 (RLLV…RLGH), 148–194 (KCYL…ITYG), 217–265 (KLVI…TIGN), and 266–313 (KMYV…LMDT). Residues lysine 105, lysine 163, and lysine 244 each participate in a glycyl lysine isopeptide (Lys-Gly) (interchain with G-Cter in ubiquitin) cross-link. Residue lysine 282 forms a Glycyl lysine isopeptide (Lys-Gly) (interchain with G-Cter in SUMO2) linkage. At lysine 288 the chain carries N6-acetyllysine. A Glycyl lysine isopeptide (Lys-Gly) (interchain with G-Cter in ubiquitin) cross-link involves residue lysine 363. A Fibronectin type-III 1 domain is found at 366–466 (PPARVQLVRA…TTTTIQVLPT (101 aa)). The tract at residues 407-434 (ATATSPTPNPVPSVPANPPKSPAPAAAA) is disordered. Serine 411 bears the Phosphoserine mark. The segment covering 413 to 428 (TPNPVPSVPANPPKSP) has biased composition (pro residues). The segment at 500–550 (LVTMRPASQAGKAPVTVTSLPAGVRMVVPTQSAQGTVIGSSPQMSGMAALA) is required for interaction with OGT. Residues arginine 504 and arginine 524 each carry the omega-N-methylarginine modification. Phosphoserine is present on residues serine 598, serine 666, and serine 669. Positions 610–722 (LKTAAAQVGT…KGPLPAGTIL (113 aa)) are interaction with SIN3A. The interaction with ZBTB17 stretch occupies residues 750 to 902 (ILGISSVSPS…SLAGAGGHST (153 aa)). Residue lysine 813 is modified to N6-acetyllysine. The tract at residues 813–912 (KIITAVPKIA…SASLATPITT (100 aa)) is interaction with GABP2. 3 HCF repeat repeats span residues 1010-1035 (TLVCSNPPCETHETGTTNTATTTVVA), 1072-1097 (VRVCSNPPCETHETGTTNTATTATSN), and 1101-1126 (QHGCSNPPCETHETGTTNTATTAMSS). The HCF repeat 4; degenerate repeat unit spans residues 1158 to 1183 (AAQGSKSQCQTRQTSATSTTMTVMAT). Position 1205 is a phosphoserine (serine 1205). Arginine 1219 is modified (omega-N-methylarginine). Serine 1224 is subject to Phosphoserine. HCF repeat repeat units lie at residues 1286 to 1311 (TQVCSNPPCETHETGTTNTATTSNAG) and 1314 to 1339 (QRVCSNPPCETHETGTTHTATTATSN). Disordered regions lie at residues 1292 to 1371 (PPCE…TMSV), 1435 to 1470 (TVTSNMSSNQDPPPAASDQGEVESTQGDSVNITSSS), and 1487 to 1515 (VTQSTPVPGPSVPPPEELQVSPGPRQQLP). Composition is skewed to low complexity over residues 1299-1312 (TGTTNTATTSNAGS), 1329-1339 (TTHTATTATSN), and 1362-1371 (TTSTGTTMSV). An HCF repeat 7; degenerate repeat occupies 1349–1374 (QQPPAGRPCETHQTTSTGTTMSVSVG). The stretch at 1414–1439 (QRVCSNPPCETHETGTTHTATTVTSN) is one HCF repeat 8 repeat. At threonine 1491 the chain carries Phosphothreonine. Residues 1493 to 1502 (VPGPSVPPPE) show a composition bias toward pro residues. Phosphoserine occurs at positions 1497, 1507, and 1771. Fibronectin type-III domains are found at residues 1797-1888 (LPPP…TCLP) and 1890-2006 (FPGA…TSKD). Residues lysine 1807 and lysine 1808 each participate in a glycyl lysine isopeptide (Lys-Gly) (interchain with G-Cter in ubiquitin) cross-link. Phosphoserine is present on serine 1838. Residues 1994–2035 (ATQVRWLQETSKDSSGTKPANKRPMSSPEMKSAPKKSKADGQ) form a disordered region. Lysine 2005 is subject to N6-acetyllysine. Lysine 2024 is covalently cross-linked (Glycyl lysine isopeptide (Lys-Gly) (interchain with G-Cter in SUMO2)).

Composed predominantly of six polypeptides ranging from 110 to 150 kDa and a minor 300 kDa polypeptide. The majority of N- and C-terminal cleavage products remain tightly, albeit non-covalently, associated. Interacts with POU2F1, CREB3, ZBTB17, EGR2, E2F4, CREBZF, SP1, GABP2, Sin3 HDAC complex (SIN3A, HDAC1, HDAC2, SUDS3), SAP30, SIN3B and FHL2. Component of a MLL1 complex, composed of at least the core components KMT2A/MLL1, ASH2L, HCFC1, WDR5 and RBBP5, as well as the facultative components BACC1, CHD8, DPY30, E2F6, HCFC2, HSP70, INO80C, KANSL1, LAS1L, MAX, MCRS1, MEN1, MGA, KAT8, PELP1, PHF20, PRP31, RING2, RUVBL1, RUVBL2, SENP3, TAF1, TAF4, TAF6, TAF7, TAF9 and TEX10. Component of a THAP1/THAP3-HCFC1-OGT complex that is required for the regulation of the transcriptional activity of RRM1. Interacts directly with THAP3 (via its HBM). Interacts (via the Kelch-repeat domain) with THAP1 (via the HBM); the interaction recruits HCHC1 to the RRM1. Interacts with THAP7 and THAP11 (via the HMB). Interacts directly with OGT; the interaction, which requires the HCFC1 cleavage site domain, glycosylates and promotes the proteolytic processing of HCFC1, retains OGT in the nucleus and impacts the expression of herpes simplex virus immediate early viral genes. Component of the SET1 complex, at least composed of the catalytic subunit (SETD1A or SETD1B), WDR5, WDR82, RBBP5, ASH2L, CXXC1, HCFC1 and DPY30. Component of the NSL complex at least composed of MOF/KAT8, KANSL1, KANSL2, KANSL3, MCRS1, PHF20, OGT1/OGT, WDR5 and HCFC1. Component of a complex at least composed of ZNF335, HCFC1, CCAR2, EMSY, MKI67, RBBP5, ASH2L and WDR5; the complex is formed as a result of interactions between components of a nuclear receptor-mediated transcription complex and a histone methylation complex. Within the complex interacts with ZNF335. Interacts with TET2 and TET3. Interacts with HCFC1R1. Interacts with THAP11. Interacts (via Kelch domain) with KMT2E/MLL5 isoform 3 (via HBM motif). Interacts with E2F1. Accessory scaffold component of the polycomb repressive deubiquitinase (PR-DUB) complex, at least composed of BAP1, one of ASXL1, ASXL2 or (probably) ASXL3 and one of MBD5 or MBD6; the PR-DUB core associates with a number of accessory proteins, including FOXK1, FOXK2, KDM1B, HCFC1, YY1 and OGT. Interacts with YY1 (via Gly-rich region); the interaction is direct. Interacts with BAP1 (via HBM-like motif). As to quaternary structure, (Microbial infection) Associates with the VP16-induced complex; binding to HCFC1 activates the viral transcriptional activator VP16 for association with POU2F1, to form a multiprotein-DNA complex responsible for activating transcription of the viral immediate early genes. Interacts with the viral transactivator protein VP16. In terms of processing, proteolytically cleaved at one or several PPCE--THET sites within the HCF repeats. Further cleavage of the primary N- and C-terminal chains results in a 'trimming' and accumulation of the smaller chains. Cleavage is promoted by O-glycosylation. O-glycosylated. GlcNAcylation by OGT promotes proteolytic processing. Post-translationally, ubiquitinated. Lys-1807 and Lys-1808 are ubiquitinated both via 'Lys-48'- and 'Lys-63'-linked polyubiquitin chains. BAP1 mediated deubiquitination of 'Lys-48'-linked polyubiquitin chains; deubiquitination by BAP1 does not seem to stabilize the protein. In terms of tissue distribution, highly expressed in fetal tissues and the adult kidney. Present in all tissues tested.

The protein resides in the cytoplasm. It is found in the nucleus. In terms of biological role, transcriptional coregulator. Serves as a scaffold protein, bridging interactions between transcription factors, including THAP11 and ZNF143, and transcriptional coregulators. Involved in control of the cell cycle. Also antagonizes transactivation by ZBTB17 and GABP2; represses ZBTB17 activation of the p15(INK4b) promoter and inhibits its ability to recruit p300. Coactivator for EGR2 and GABP2. Tethers the chromatin modifying Set1/Ash2 histone H3 'Lys-4' methyltransferase (H3K4me) and Sin3 histone deacetylase (HDAC) complexes (involved in the activation and repression of transcription, respectively) together. Component of a THAP1/THAP3-HCFC1-OGT complex that is required for the regulation of the transcriptional activity of RRM1. As part of the NSL complex it may be involved in acetylation of nucleosomal histone H4 on several lysine residues. Recruits KMT2E/MLL5 to E2F1 responsive promoters promoting transcriptional activation and thereby facilitates G1 to S phase transition. Modulates expression of homeobox protein PDX1, perhaps acting in concert with transcription factor E2F1, thereby regulating pancreatic beta-cell growth and glucose-stimulated insulin secretion. May negatively modulate transcriptional activity of FOXO3. Its function is as follows. (Microbial infection) In case of human herpes simplex virus (HSV) infection, HCFC1 forms a multiprotein-DNA complex with the viral transactivator protein VP16 and POU2F1 thereby enabling the transcription of the viral immediate early genes. The chain is Host cell factor 1 from Homo sapiens (Human).